The chain runs to 328 residues: 2,4-dinitroanisole O-demethylase subunit alpha (328 aa).

The propeptide occupies 1 to 9; the sequence is MSVTSQTSS. Positions 101, 103, 105, 168, 225, and 247 each coordinate Zn(2+).

Belongs to the metallo-beta-lactamase superfamily. As to quaternary structure, part of the complex DnhAB composed of the 2,4-dinitroanisole O-demethylase alpha (DnhA) and beta (DnhB) subunits. The cofactor is Zn(2+).

The catalysed reaction is 2,4-dinitroanisole + H2O = 2,4-dinitrophenol + methanol + H(+). Functionally, involved in the degradation of 2,4-dinitroanisole (DNAN), an insensitive munition ingredient used in explosive formulations as a replacement for 2,4,6-trinitrotoluene (TNT). Catalyzes the removal of the methyl group from 2,4-dinitroanisole (DNAN) to yield 2,4-dinitrophenol (2,4-DNP) and methanol. In Nocardioides sp. (strain JS1661), this protein is 2,4-dinitroanisole O-demethylase subunit alpha.